The sequence spans 667 residues: Small ribosomal subunit protein mS39 (667 aa).

A mitochondrion-targeting transit peptide spans 1–11 (MASSCSQALRH). Positions 199-226 (EAEQRSEEMEDIQDETQTKKGRSPKASD) are disordered. PPR repeat units lie at residues 249-283 (NTRS…RLKA), 284-323 (DVHI…KVKP), 324-360 (NLLT…SIEP), 361-400 (SLAS…SFTP), 482-516 (SSNA…GHGN), and 565-599 (TASS…NRVP).

The protein belongs to the mitochondrion-specific ribosomal protein mS39 family.

It is found in the mitochondrion. In terms of biological role, mitochondrial RNA-binding protein that may have a role in mitochondrial translation. This is Small ribosomal subunit protein mS39 (ptcd3) from Danio rerio (Zebrafish).